The primary structure comprises 241 residues: NAD(P)H-quinone oxidoreductase subunit K (241 aa).

Residues C60, C61, C125, and C156 each contribute to the [4Fe-4S] cluster site. The interval S220–D241 is disordered. The segment covering Q222–D241 has biased composition (basic and acidic residues).

This sequence belongs to the complex I 20 kDa subunit family. As to quaternary structure, NDH-1 can be composed of about 15 different subunits; different subcomplexes with different compositions have been identified which probably have different functions. It depends on [4Fe-4S] cluster as a cofactor.

It localises to the cellular thylakoid membrane. The catalysed reaction is a plastoquinone + NADH + (n+1) H(+)(in) = a plastoquinol + NAD(+) + n H(+)(out). It carries out the reaction a plastoquinone + NADPH + (n+1) H(+)(in) = a plastoquinol + NADP(+) + n H(+)(out). NDH-1 shuttles electrons from an unknown electron donor, via FMN and iron-sulfur (Fe-S) centers, to quinones in the respiratory and/or the photosynthetic chain. The immediate electron acceptor for the enzyme in this species is believed to be plastoquinone. Couples the redox reaction to proton translocation, and thus conserves the redox energy in a proton gradient. Cyanobacterial NDH-1 also plays a role in inorganic carbon-concentration. The sequence is that of NAD(P)H-quinone oxidoreductase subunit K from Prochlorococcus marinus (strain MIT 9215).